We begin with the raw amino-acid sequence, 94 residues long: Small ribosomal subunit protein uS19 (94 aa).

The protein belongs to the universal ribosomal protein uS19 family.

Functionally, protein S19 forms a complex with S13 that binds strongly to the 16S ribosomal RNA. The polypeptide is Small ribosomal subunit protein uS19 (Pelotomaculum thermopropionicum (strain DSM 13744 / JCM 10971 / SI)).